The chain runs to 121 residues: Small ribosomal subunit protein uS13 (121 aa).

Positions 92-121 are disordered; it reads RKGLPMRGQRTRTNARTRKGPRRAAQALKK.

Belongs to the universal ribosomal protein uS13 family. Part of the 30S ribosomal subunit. Forms a loose heterodimer with protein S19. Forms two bridges to the 50S subunit in the 70S ribosome.

In terms of biological role, located at the top of the head of the 30S subunit, it contacts several helices of the 16S rRNA. In the 70S ribosome it contacts the 23S rRNA (bridge B1a) and protein L5 of the 50S subunit (bridge B1b), connecting the 2 subunits; these bridges are implicated in subunit movement. Contacts the tRNAs in the A and P-sites. This is Small ribosomal subunit protein uS13 from Burkholderia cenocepacia (strain HI2424).